We begin with the raw amino-acid sequence, 215 residues long: Probable phosphoglycerate mutase GpmB (215 aa).

Substrate-binding positions include 8 to 15 (RHGETEWN), 21 to 22 (QG), Arg58, Arg60, 82 to 85 (ELHM), and 151 to 152 (GI). His9 functions as the Tele-phosphohistidine intermediate in the catalytic mechanism. Catalysis depends on Glu82, which acts as the Proton donor/acceptor.

The protein belongs to the phosphoglycerate mutase family. GpmB subfamily.

It carries out the reaction (2R)-2-phosphoglycerate = (2R)-3-phosphoglycerate. Its pathway is carbohydrate degradation; glycolysis; pyruvate from D-glyceraldehyde 3-phosphate: step 3/5. The chain is Probable phosphoglycerate mutase GpmB from Serratia proteamaculans (strain 568).